A 202-amino-acid chain; its full sequence is Superoxide dismutase [Mn] (202 aa).

Residues histidine 27, histidine 82, aspartate 164, and histidine 168 each contribute to the Mn(2+) site.

Belongs to the iron/manganese superoxide dismutase family. In terms of assembly, homodimer. Requires Mn(2+) as cofactor.

The catalysed reaction is 2 superoxide + 2 H(+) = H2O2 + O2. Functionally, destroys superoxide anion radicals which are normally produced within the cells and which are toxic to biological systems. In Listeria innocua serovar 6a (strain ATCC BAA-680 / CLIP 11262), this protein is Superoxide dismutase [Mn] (sodA).